The sequence spans 222 residues: Uracil-DNA glycosylase (222 aa).

The Proton acceptor role is filled by Asp61.

The protein belongs to the uracil-DNA glycosylase (UDG) superfamily. UNG family.

It is found in the cytoplasm. The catalysed reaction is Hydrolyzes single-stranded DNA or mismatched double-stranded DNA and polynucleotides, releasing free uracil.. Excises uracil residues from the DNA which can arise as a result of misincorporation of dUMP residues by DNA polymerase or due to deamination of cytosine. The protein is Uracil-DNA glycosylase of Aeromonas hydrophila subsp. hydrophila (strain ATCC 7966 / DSM 30187 / BCRC 13018 / CCUG 14551 / JCM 1027 / KCTC 2358 / NCIMB 9240 / NCTC 8049).